The primary structure comprises 343 residues: Anthranilate phosphoribosyltransferase (343 aa).

Residues Gly-84, 87–88 (GD), Thr-92, 94–97 (NIST), 112–120 (KHGNRGVSS), and Ser-124 contribute to the 5-phospho-alpha-D-ribose 1-diphosphate site. Gly-84 lines the anthranilate pocket. Ser-96 contacts Mg(2+). Residue Asn-115 participates in anthranilate binding. Arg-170 serves as a coordination point for anthranilate. Mg(2+)-binding residues include Asp-229 and Glu-230.

The protein belongs to the anthranilate phosphoribosyltransferase family. In terms of assembly, homodimer. The cofactor is Mg(2+).

It carries out the reaction N-(5-phospho-beta-D-ribosyl)anthranilate + diphosphate = 5-phospho-alpha-D-ribose 1-diphosphate + anthranilate. It functions in the pathway amino-acid biosynthesis; L-tryptophan biosynthesis; L-tryptophan from chorismate: step 2/5. Catalyzes the transfer of the phosphoribosyl group of 5-phosphorylribose-1-pyrophosphate (PRPP) to anthranilate to yield N-(5'-phosphoribosyl)-anthranilate (PRA). In Burkholderia ambifaria (strain ATCC BAA-244 / DSM 16087 / CCUG 44356 / LMG 19182 / AMMD) (Burkholderia cepacia (strain AMMD)), this protein is Anthranilate phosphoribosyltransferase.